Here is a 266-residue protein sequence, read N- to C-terminus: Zinc transport system ATP-binding protein TroB (266 aa).

The ABC transporter domain maps to 11-243; sequence VQVDDLTLAY…YVQRAYGGRI (233 aa). An ATP-binding site is contributed by 43–50; it reads GPNGAGKS.

This sequence belongs to the ABC transporter superfamily.

In terms of biological role, part of an ATP-driven transport system TroABCD for zinc. This is Zinc transport system ATP-binding protein TroB (troB) from Treponema pallidum (strain Nichols).